A 420-amino-acid chain; its full sequence is Gamma-glutamyl phosphate reductase (420 aa).

Belongs to the gamma-glutamyl phosphate reductase family.

It localises to the cytoplasm. The enzyme catalyses L-glutamate 5-semialdehyde + phosphate + NADP(+) = L-glutamyl 5-phosphate + NADPH + H(+). It participates in amino-acid biosynthesis; L-proline biosynthesis; L-glutamate 5-semialdehyde from L-glutamate: step 2/2. Its function is as follows. Catalyzes the NADPH-dependent reduction of L-glutamate 5-phosphate into L-glutamate 5-semialdehyde and phosphate. The product spontaneously undergoes cyclization to form 1-pyrroline-5-carboxylate. The protein is Gamma-glutamyl phosphate reductase of Streptococcus pneumoniae (strain CGSP14).